Reading from the N-terminus, the 134-residue chain is NADH-quinone oxidoreductase subunit A 1 (134 aa).

3 helical membrane-spanning segments follow: residues Leu10–Ala30, Phe65–Trp85, and Ile94–Leu114.

This sequence belongs to the complex I subunit 3 family. As to quaternary structure, NDH-1 is composed of 14 different subunits. Subunits NuoA, H, J, K, L, M, N constitute the membrane sector of the complex.

The protein resides in the cell inner membrane. The catalysed reaction is a quinone + NADH + 5 H(+)(in) = a quinol + NAD(+) + 4 H(+)(out). Functionally, NDH-1 shuttles electrons from NADH, via FMN and iron-sulfur (Fe-S) centers, to quinones in the respiratory chain. The immediate electron acceptor for the enzyme in this species is believed to be ubiquinone. Couples the redox reaction to proton translocation (for every two electrons transferred, four hydrogen ions are translocated across the cytoplasmic membrane), and thus conserves the redox energy in a proton gradient. The protein is NADH-quinone oxidoreductase subunit A 1 of Citrifermentans bemidjiense (strain ATCC BAA-1014 / DSM 16622 / JCM 12645 / Bem) (Geobacter bemidjiensis).